A 485-amino-acid chain; its full sequence is Glutamyl-tRNA(Gln) amidotransferase subunit A (485 aa).

Catalysis depends on charge relay system residues K79 and S154. The active-site Acyl-ester intermediate is S178.

Belongs to the amidase family. GatA subfamily. In terms of assembly, heterotrimer of A, B and C subunits.

The catalysed reaction is L-glutamyl-tRNA(Gln) + L-glutamine + ATP + H2O = L-glutaminyl-tRNA(Gln) + L-glutamate + ADP + phosphate + H(+). In terms of biological role, allows the formation of correctly charged Gln-tRNA(Gln) through the transamidation of misacylated Glu-tRNA(Gln) in organisms which lack glutaminyl-tRNA synthetase. The reaction takes place in the presence of glutamine and ATP through an activated gamma-phospho-Glu-tRNA(Gln). This is Glutamyl-tRNA(Gln) amidotransferase subunit A from Staphylococcus epidermidis (strain ATCC 35984 / DSM 28319 / BCRC 17069 / CCUG 31568 / BM 3577 / RP62A).